A 70-amino-acid polypeptide reads, in one-letter code: Ranatuerin-2SN1 (70 aa).

A signal peptide spans 1 to 22 (MFTLKKSLLLIFFLGTISLSLC). Residues 23-40 (EKERDADDDEVEVIKQEE) constitute a propeptide, removed in mature form. Cys65 and Cys70 are joined by a disulfide.

The protein belongs to the frog skin active peptide (FSAP) family. Ranatuerin subfamily. In terms of tissue distribution, expressed by the skin glands.

It localises to the secreted. In terms of biological role, antimicrobial peptide. Weakly active against P.faecalis X29. Not active against fungi. Shows very weak hemolytic activity against human erythrocytes. This Sylvirana spinulosa (Fine-spined frog) protein is Ranatuerin-2SN1.